Reading from the N-terminus, the 283-residue chain is Myeloid differentiation primary response protein MyD88-B (283 aa).

Positions Arg27 to Ile105 constitute a Death domain. Residues Glu106–Gly143 form an intermediate domain region. Residues Glu147–Leu281 enclose the TIR domain.

The protein localises to the cytoplasm. In terms of biological role, adapter protein involved in the Toll-like receptor and IL-1 receptor signaling pathway in the innate immune response. Activates expression of target genes in the Spemann organizer region during early embryonic development. Is required for normal axis formation. This Xenopus laevis (African clawed frog) protein is Myeloid differentiation primary response protein MyD88-B (myd88-b).